Here is a 67-residue protein sequence, read N- to C-terminus: Small ribosomal subunit protein eS17 (67 aa).

The protein belongs to the eukaryotic ribosomal protein eS17 family.

This chain is Small ribosomal subunit protein eS17, found in Thermococcus sibiricus (strain DSM 12597 / MM 739).